Here is a 175-residue protein sequence, read N- to C-terminus: MADPARARRLAKRITTIVASAIEYEIKDPGLVGVTITDAKVTADLHDATVYYTVMGPTLDDEPDYAAAAAALERAKGVLRTKVGAGTGVRFTPTLTFTRDVTSDTVHRMDELLARARAADADLARVRVGAKPAGEADPYRDRGSADEPSDAGGLVIRTSDGLEAENTGDDYQAED.

The segment at 129–175 is disordered; it reads GAKPAGEADPYRDRGSADEPSDAGGLVIRTSDGLEAENTGDDYQAED. The span at 162–175 shows a compositional bias: acidic residues; that stretch reads LEAENTGDDYQAED.

The protein belongs to the RbfA family. In terms of assembly, monomer. Binds 30S ribosomal subunits, but not 50S ribosomal subunits or 70S ribosomes.

It is found in the cytoplasm. In terms of biological role, one of several proteins that assist in the late maturation steps of the functional core of the 30S ribosomal subunit. Associates with free 30S ribosomal subunits (but not with 30S subunits that are part of 70S ribosomes or polysomes). Required for efficient processing of 16S rRNA. May interact with the 5'-terminal helix region of 16S rRNA. This chain is Ribosome-binding factor A, found in Mycobacterium marinum (strain ATCC BAA-535 / M).